Consider the following 296-residue polypeptide: Elongation factor Ts (296 aa).

Residues 79-82 (TDFV) form an involved in Mg(2+) ion dislocation from EF-Tu region.

This sequence belongs to the EF-Ts family.

It localises to the cytoplasm. Functionally, associates with the EF-Tu.GDP complex and induces the exchange of GDP to GTP. It remains bound to the aminoacyl-tRNA.EF-Tu.GTP complex up to the GTP hydrolysis stage on the ribosome. This Spiroplasma citri protein is Elongation factor Ts (tsf).